The following is a 201-amino-acid chain: Small ribosomal subunit protein uS4c (201 aa).

The disordered stretch occupies residues 15–43; the sequence is LGALPGLTRKTPKSGSNQKKKFHSGKKEQ. The 62-residue stretch at 89-150 folds into the S4 RNA-binding domain; the sequence is MRLDNILFRL…NQRSKRLVQN (62 aa).

This sequence belongs to the universal ribosomal protein uS4 family. Part of the 30S ribosomal subunit. Contacts protein S5. The interaction surface between S4 and S5 is involved in control of translational fidelity.

The protein localises to the plastid. Its subcellular location is the chloroplast. In terms of biological role, one of the primary rRNA binding proteins, it binds directly to 16S rRNA where it nucleates assembly of the body of the 30S subunit. Its function is as follows. With S5 and S12 plays an important role in translational accuracy. This is Small ribosomal subunit protein uS4c (rps4) from Sorghum bicolor (Sorghum).